We begin with the raw amino-acid sequence, 189 residues long: Pyridoxal 5'-phosphate synthase subunit PdxT (189 aa).

52 to 54 provides a ligand contact to L-glutamine; the sequence is GES. The active-site Nucleophile is the Cys-81. L-glutamine is bound by residues Arg-108 and 136 to 137; that span reads IR. Catalysis depends on charge relay system residues His-172 and Glu-174.

It belongs to the glutaminase PdxT/SNO family. In terms of assembly, in the presence of PdxS, forms a dodecamer of heterodimers. Only shows activity in the heterodimer.

The enzyme catalyses aldehydo-D-ribose 5-phosphate + D-glyceraldehyde 3-phosphate + L-glutamine = pyridoxal 5'-phosphate + L-glutamate + phosphate + 3 H2O + H(+). It catalyses the reaction L-glutamine + H2O = L-glutamate + NH4(+). It participates in cofactor biosynthesis; pyridoxal 5'-phosphate biosynthesis. Functionally, catalyzes the hydrolysis of glutamine to glutamate and ammonia as part of the biosynthesis of pyridoxal 5'-phosphate. The resulting ammonia molecule is channeled to the active site of PdxS. This is Pyridoxal 5'-phosphate synthase subunit PdxT from Haemophilus ducreyi (strain 35000HP / ATCC 700724).